Here is a 476-residue protein sequence, read N- to C-terminus: MEEDLIKRLEAAVTRLEGISSNGGGVVSLSRGGDFSSAAGIDIASSDPSILAYEDLISQCVGRALTAAEKIGGPVLDVTKIVAEAFASQKELLVRIKQTQKPDLAGLAGFLKPLNDVTMKANAMTEGKRSDFFNHLKAACDSLSALAWIAFTGKDCGMSMPIAHVEESWQMAEFYNNKVLVEYRNKDADHVEWAKALKELYLPGLREYVKSHYPLGPVWNASGKPASAPAKGPPGAPAPPPAPLFSAESSKPSSSSNQKQGMSAVFQQLSSGAVTSGLRKVTDDMKTKNRADRSGAVSAVEKETRTSKPAFSKTGPPKMELQMGRKWAVENQIGKKDLVISECDSKQSVYIYGCKDSVLQIQGKVNNITIDKCTKVGVVFTDVVAAFEIVNCNNVEVQCQGSAPTVSVDNTTGCQLYLNKDSLETAITTAKSSEINVMVPGATPDGDWVEHALPQQYNHVFTEGKFETTPVSHSGA.

Disordered regions lie at residues 224–262 (KPAS…KQGM) and 277–319 (GLRK…PPKM). Residues 231-243 (KGPPGAPAPPPAP) are compositionally biased toward pro residues. The span at 246-256 (SAESSKPSSSS) shows a compositional bias: low complexity. Basic and acidic residues predominate over residues 280 to 293 (KVTDDMKTKNRADR). One can recognise a C-CAP/cofactor C-like domain in the interval 316 to 453 (PPKMELQMGR…PDGDWVEHAL (138 aa)).

Belongs to the CAP family. In terms of tissue distribution, expressed in roots, cotyledons, leaves, stems, flowers, pollen and shoots. Not detected in siliques.

Its function is as follows. Actin monomer binding protein that accelerates the exchange of ADP for ATP. Regulates the pool of unpolymerized ATP-actin. Key intermediate between actin-depolymerizing factor (ADF)-mediated disassembly and the profilin-based nucleation and elongation machinery. This chain is Cyclase-associated protein 1 (CAP1), found in Arabidopsis thaliana (Mouse-ear cress).